The following is a 212-amino-acid chain: Putative 3-methyladenine DNA glycosylase (212 aa).

It belongs to the DNA glycosylase MPG family.

The sequence is that of Putative 3-methyladenine DNA glycosylase from Frankia casuarinae (strain DSM 45818 / CECT 9043 / HFP020203 / CcI3).